The chain runs to 414 residues: Cyclin-B1-3 (414 aa).

This sequence belongs to the cyclin family. Cyclin AB subfamily. Expressed in roots, stems and flowers.

In Arabidopsis thaliana (Mouse-ear cress), this protein is Cyclin-B1-3 (CYCB1-3).